The primary structure comprises 160 residues: Large ribosomal subunit protein uL11 (160 aa).

This sequence belongs to the universal ribosomal protein uL11 family. In terms of assembly, part of the ribosomal stalk of the 50S ribosomal subunit. Interacts with L10 and the large rRNA to form the base of the stalk. L10 forms an elongated spine to which L12 dimers bind in a sequential fashion forming a multimeric L10(L12)X complex.

In terms of biological role, forms part of the ribosomal stalk which helps the ribosome interact with GTP-bound translation factors. The polypeptide is Large ribosomal subunit protein uL11 (Methanococcus aeolicus (strain ATCC BAA-1280 / DSM 17508 / OCM 812 / Nankai-3)).